We begin with the raw amino-acid sequence, 750 residues long: Methylmalonyl-CoA mutase, mitochondrial (750 aa).

The N-terminal 32 residues, 1 to 32 (MLRAKNQLFLLSPHYLRQVKESSGSRLIQQRL), are a transit peptide targeting the mitochondrion. Q50 is a malonyl-CoA binding site. Residue K89 is modified to N6-acetyllysine. Malonyl-CoA is bound by residues 96–99 (YPTM) and 106–110 (TIRQY). At K212 the chain carries N6-acetyllysine. Malonyl-CoA-binding positions include 216–218 (TIQ), R228, K255, H265, and 304–306 (RLS). N6-acetyllysine is present on K335. At K343 the chain carries N6-succinyllysine. Phosphoserine is present on S481. K595 is modified (N6-succinyllysine). Residue K602 is modified to N6-acetyllysine. The 133-residue stretch at 614-746 (RPRLLVAKMG…DDIEKCLEKK (133 aa)) folds into the B12-binding domain. Position 627 (H627) interacts with adenosylcob(III)alamin.

Belongs to the methylmalonyl-CoA mutase family. As to quaternary structure, homodimer. Interacts (the apoenzyme form) with MMAA; the interaction is GTP dependent. Adenosylcob(III)alamin is required as a cofactor.

The protein localises to the mitochondrion matrix. It localises to the mitochondrion. The protein resides in the cytoplasm. The catalysed reaction is (R)-methylmalonyl-CoA = succinyl-CoA. Inhibited by itaconyl-CoA, a metabolite that inactivates the coenzyme B12 cofactor. Functionally, catalyzes the reversible isomerization of methylmalonyl-CoA (MMCoA) (generated from branched-chain amino acid metabolism and degradation of dietary odd chain fatty acids and cholesterol) to succinyl-CoA (3-carboxypropionyl-CoA), a key intermediate of the tricarboxylic acid cycle. This is Methylmalonyl-CoA mutase, mitochondrial (MMUT) from Bos taurus (Bovine).